We begin with the raw amino-acid sequence, 638 residues long: MAKVIGIDLGTTNSCVSVMDGKDAKVIENSEGARTTPSMVAFSDDGERLVGQPAKRQAVTNPTNTLFAVKRLIGRRYEDPTVEKDKGLVPFPIIKGDNGDAWVEAQGKGYSPAQISAMILQKMKETAEAYLGEKVEKAVITVPAYFNDAQRQATKDAGRIAGLEVLRIINEPTAAALAYGLDKTEGKTIAVYDLGGGTFDISVLEIGDGVFEVKSTNGDTFLGGEDFDMRLVEYLAAEFKKEQGIELKNDKLALQRLKEAAEKAKIELSSSQQTEINLPFITADASGPKHLTMKLTRAKFENLVDDLVQRTVAPCKAALKDAGVTAADIDEVVLVGGMSRMPKVQEVVKQLFGKEPHKGVNPDEVVAMGAAIQAGVLQGDVKDVLLLDVTPLSLGIETLGGVFTRLIDRNTTIPTKKSQVFSTADDNQQAVTIRVSQGEREMAQDNKLLGQFDLVGLPPSPRGVPQIEVTFDIDANGIVQVSAKDKGTGKEQQIRIQASGGLSDADIEKMVKDAEANAEADKNRRAVVEAKNQAESLIHSTEKSVKDYGDKVSADDRKAIEDAIAALKSSIETSEPNAEDIQAKTQTLMEVSMKLGQAIYESQQAEGGAEGGPSGHHDDGIVDADYEEVKDDNTKKSA.

Residue T198 is modified to Phosphothreonine; by autocatalysis. Residues 599–638 (IYESQQAEGGAEGGPSGHHDDGIVDADYEEVKDDNTKKSA) form a disordered region. Residues 621 to 630 (IVDADYEEVK) are compositionally biased toward acidic residues.

Belongs to the heat shock protein 70 family.

Acts as a chaperone. The protein is Chaperone protein DnaK of Allorhizobium ampelinum (strain ATCC BAA-846 / DSM 112012 / S4) (Agrobacterium vitis (strain S4)).